A 569-amino-acid chain; its full sequence is Urease subunit alpha (569 aa).

The region spanning 131–569 (GSIDTHIHFI…VPMAQRYFLL (439 aa)) is the Urease domain. Residues His136, His138, and Lys219 each coordinate Ni(2+). Lys219 is subject to N6-carboxylysine. Residue His221 coordinates substrate. Residues His248 and His274 each contribute to the Ni(2+) site. The active-site Proton donor is the His322. Position 362 (Asp362) interacts with Ni(2+).

This sequence belongs to the metallo-dependent hydrolases superfamily. Urease alpha subunit family. Heterotrimer of UreA (gamma), UreB (beta) and UreC (alpha) subunits. Three heterotrimers associate to form the active enzyme. It depends on Ni cation as a cofactor. Post-translationally, carboxylation allows a single lysine to coordinate two nickel ions.

The protein resides in the cytoplasm. The catalysed reaction is urea + 2 H2O + H(+) = hydrogencarbonate + 2 NH4(+). Its pathway is nitrogen metabolism; urea degradation; CO(2) and NH(3) from urea (urease route): step 1/1. The chain is Urease subunit alpha from Prochlorococcus marinus (strain AS9601).